Reading from the N-terminus, the 157-residue chain is Phosphopantetheine adenylyltransferase (157 aa).

Residue S9 coordinates substrate. ATP contacts are provided by residues 9–10 (SF) and H17. Residues K41, L74, and K88 each contribute to the substrate site. ATP is bound by residues 89 to 91 (GLR), E99, and 123 to 129 (YTHVSSS).

This sequence belongs to the bacterial CoaD family. In terms of assembly, homohexamer. Mg(2+) serves as cofactor.

The protein localises to the cytoplasm. The catalysed reaction is (R)-4'-phosphopantetheine + ATP + H(+) = 3'-dephospho-CoA + diphosphate. The protein operates within cofactor biosynthesis; coenzyme A biosynthesis; CoA from (R)-pantothenate: step 4/5. Functionally, reversibly transfers an adenylyl group from ATP to 4'-phosphopantetheine, yielding dephospho-CoA (dPCoA) and pyrophosphate. This Micrococcus luteus (strain ATCC 4698 / DSM 20030 / JCM 1464 / CCM 169 / CCUG 5858 / IAM 1056 / NBRC 3333 / NCIMB 9278 / NCTC 2665 / VKM Ac-2230) (Micrococcus lysodeikticus) protein is Phosphopantetheine adenylyltransferase.